We begin with the raw amino-acid sequence, 149 residues long: Transcriptional repressor NrdR (149 aa).

A zinc finger lies at cysteine 3–cysteine 34. One can recognise an ATP-cone domain in the interval isoleucine 49–aspartate 139.

It belongs to the NrdR family. Zn(2+) serves as cofactor.

In terms of biological role, negatively regulates transcription of bacterial ribonucleotide reductase nrd genes and operons by binding to NrdR-boxes. This Neorickettsia sennetsu (strain ATCC VR-367 / Miyayama) (Ehrlichia sennetsu) protein is Transcriptional repressor NrdR.